Here is a 448-residue protein sequence, read N- to C-terminus: MTWSTSFLVATSLLSIINSVHAQLTGSVGPLTSVIDKAAVKTCNVCDYGASSDNTTGVGQPIIDAFTDCGSGGLIHVPEGDYLLKDWVSSENGSAWSIQLDGVLHWDSSPSAQSYIFAITGGSDSELSSSNATGAIQGSGYLYHRHNTYTSPRMLYISGVSDWTVHDLVLVNSPMPHFVIDGGYNGEAYNMAICGGDHGGLDGIDLYGGNIWIHLMVTNKDECVTSKTNSHNFLIENIYCNPSGGCAIGSLGSSVNVTNILYRNVYTWDSNQMMMIKTNGGLGNVSNIVFENFIGHGNVNSLDLDSYWSSMNAIDGVGIYYHNITIYNWTGTAIDGETRPPIRVICPEDMPCTEITLVQIDLLVEEGRYDEYYCAIACGGYCLDSATSTLTTYTTTTYGNSASTGYEAPTMADDLATAFGTTASIPTPTTPASFFPGVAPVSAVAGSS.

The N-terminal stretch at 1-22 (MTWSTSFLVATSLLSIINSVHA) is a signal peptide. Cysteine 43 and cysteine 69 are oxidised to a cystine. N-linked (GlcNAc...) asparagine glycans are attached at residues asparagine 54, asparagine 92, and asparagine 131. Aspartate 221 functions as the Proton donor in the catalytic mechanism. Cysteine 223 and cysteine 240 are oxidised to a cystine. 2 N-linked (GlcNAc...) asparagine glycosylation sites follow: asparagine 256 and asparagine 284. Histidine 296 is an active-site residue. N-linked (GlcNAc...) asparagine glycans are attached at residues asparagine 323 and asparagine 328. Intrachain disulfides connect cysteine 346-cysteine 352 and cysteine 374-cysteine 382.

This sequence belongs to the glycosyl hydrolase 28 family.

Its subcellular location is the secreted. In terms of biological role, pectinolytic enzymes consist of four classes of enzymes: pectine lyase, polygalacturonase, pectin methylesterase and rhamnogalacturonase. Hydrolyzes alpha-D-galacturonopyranosyl-(1,2)-alpha-L-rhamnopyranosyl linkages in the backbone of the hairy regions of pectins. This is Probable rhamnogalacturonase E (rhgE) from Aspergillus niger (strain ATCC MYA-4892 / CBS 513.88 / FGSC A1513).